Consider the following 252-residue polypeptide: 2-succinyl-6-hydroxy-2,4-cyclohexadiene-1-carboxylate synthase (252 aa).

The protein belongs to the AB hydrolase superfamily. MenH family. As to quaternary structure, monomer.

It catalyses the reaction 5-enolpyruvoyl-6-hydroxy-2-succinyl-cyclohex-3-ene-1-carboxylate = (1R,6R)-6-hydroxy-2-succinyl-cyclohexa-2,4-diene-1-carboxylate + pyruvate. Its pathway is quinol/quinone metabolism; 1,4-dihydroxy-2-naphthoate biosynthesis; 1,4-dihydroxy-2-naphthoate from chorismate: step 3/7. The protein operates within quinol/quinone metabolism; menaquinone biosynthesis. Functionally, catalyzes a proton abstraction reaction that results in 2,5-elimination of pyruvate from 2-succinyl-5-enolpyruvyl-6-hydroxy-3-cyclohexene-1-carboxylate (SEPHCHC) and the formation of 2-succinyl-6-hydroxy-2,4-cyclohexadiene-1-carboxylate (SHCHC). This Escherichia coli O81 (strain ED1a) protein is 2-succinyl-6-hydroxy-2,4-cyclohexadiene-1-carboxylate synthase.